A 1118-amino-acid chain; its full sequence is Sodium-driven chloride bicarbonate exchanger (1118 aa).

4 disordered regions span residues Met-1 to Val-23, Gly-58 to Ser-96, Lys-245 to Gln-312, and Asn-457 to Leu-476. Topologically, residues Met-1–Cys-509 are cytoplasmic. The span at Arg-59–Asp-76 shows a compositional bias: basic residues. Basic and acidic residues predominate over residues Arg-77–Pro-90. At Ser-89 the chain carries Phosphoserine. Thr-94 carries the phosphothreonine modification. Residues Glu-248 to Ser-264 are compositionally biased toward polar residues. Ser-276 carries the phosphoserine modification. The chain crosses the membrane as a helical span at residues Leu-510 to Leu-530. Over Leu-531–Arg-538 the chain is Extracellular. The helical transmembrane segment at Ile-539 to Gly-559 threads the bilayer. Residues Gly-560 to Pro-562 are Cytoplasmic-facing. Residues Leu-563–Cys-583 form a helical membrane-spanning segment. Residues Lys-584–Ser-596 are Extracellular-facing. A helical membrane pass occupies residues Ile-597 to Val-617. Topologically, residues Cys-618 to Glu-626 are cytoplasmic. A helical membrane pass occupies residues Ala-627–Leu-647. Topologically, residues Ser-648 to Pro-720 are extracellular. N-linked (GlcNAc...) asparagine glycosylation is found at Asn-674, Asn-677, Asn-687, and Asn-697. The chain crosses the membrane as a helical span at residues Tyr-721–Ala-741. At Thr-742–Asp-762 the chain is on the cytoplasmic side. A helical membrane pass occupies residues Phe-763 to Ser-783. Over Pro-784–Asn-809 the chain is Extracellular. The helical transmembrane segment at Pro-810–Met-830 threads the bilayer. Residues Asp-831–Asp-855 are Cytoplasmic-facing. A helical transmembrane segment spans residues Leu-856 to Ala-876. Residues Ala-877–Thr-912 lie on the Extracellular side of the membrane. A helical transmembrane segment spans residues Gly-913–Ile-933. Residues Pro-934–Met-935 are Cytoplasmic-facing. The helical transmembrane segment at Pro-936 to Phe-956 threads the bilayer. At Asp-957–Trp-998 the chain is on the extracellular side. The chain crosses the membrane as a helical span at residues Ile-999–Val-1019. The Cytoplasmic segment spans residues Arg-1020–Ser-1118. Ser-1057 and Ser-1085 each carry phosphoserine.

The protein belongs to the anion exchanger (TC 2.A.31) family. In terms of tissue distribution, predominantly expressed in the brain.

Its subcellular location is the basolateral cell membrane. The protein localises to the apical cell membrane. It localises to the cell projection. The protein resides in the dendrite. It is found in the axon. Its subcellular location is the perikaryon. The protein localises to the presynapse. It localises to the postsynapse. It carries out the reaction 2 hydrogencarbonate(out) + chloride(in) + Na(+)(out) = 2 hydrogencarbonate(in) + chloride(out) + Na(+)(in). In terms of biological role, sodium/bicarbonate cotransporter which plays an important role in regulating intracellular pH. Has been shown to act as a sodium/bicarbonate cotransporter in exchange for intracellular chloride. Has also been shown to act as a sodium/biocarbonate cotransporter which does not couple net influx of bicarbonate to net efflux of chloride, with the observed chloride efflux being due to chloride self-exchange. Controls neuronal pH and may contribute to the secretion of cerebrospinal fluid. Acting on presynaptic intracellular pH, it promotes GABA release, reduces the excitability of CA1 pyramidal neurons, and modulates short-term synaptic plasticity. Required in retinal cells to maintain normal pH which is necessary for normal vision. In the kidney, likely to mediate bicarbonate reclamation in the apical membrane of the proximal tubules. The polypeptide is Sodium-driven chloride bicarbonate exchanger (Homo sapiens (Human)).